A 2148-amino-acid polypeptide reads, in one-letter code: Polyketide synthase 1 (2148 aa).

Residues 19–261 (FIFGDQSSCN…TPLAVHAPYH (243 aa)) are N-terminal acylcarrier protein transacylase domain (SAT). Residues 394-829 (ESKIAIIGMS…GGNTALLVED (436 aa)) enclose the Ketosynthase family 3 (KS3) domain. Active-site for beta-ketoacyl synthase activity residues include Cys566, His701, and His745. The malonyl-CoA:ACP transacylase (MAT) domain stretch occupies residues 929–1233 (AFVFSGQGSQ…PSLMRNKDGW (305 aa)). Residue Ser1018 is the For acyl/malonyl transferase activity of the active site. The tract at residues 1310–1624 (TASVHRIVHE…RKVLNTAMPP (315 aa)) is product template (PT) domain. Residues 1314 to 1447 (HRIVHESVEK…SSLHFEQPKV (134 aa)) form an N-terminal hotdog fold region. The PKS/mFAS DH domain maps to 1314–1619 (HRIVHESVEK…FQGIPRKVLN (306 aa)). His1346 serves as the catalytic Proton acceptor; for dehydratase activity. The segment at 1474 to 1619 (LNSRMSSGVI…FQGIPRKVLN (146 aa)) is C-terminal hotdog fold. Asp1533 acts as the Proton donor; for dehydratase activity in catalysis. The tract at residues 1619–1655 (NTAMPPPKSQNEAPVRSGPAKPAAKPPRSASSEHSGH) is disordered. Low complexity predominate over residues 1634 to 1650 (RSGPAKPAAKPPRSASS). The Carrier 1 domain maps to 1678–1752 (RNPMLPVFKI…DLAAHLGLDT (75 aa)). Ser1712 is modified (O-(pantetheine 4'-phosphoryl)serine). 2 stretches are compositionally biased toward low complexity: residues 1757 to 1769 (QSSG…GGLS) and 1779 to 1796 (TSSV…SVSG). The segment at 1757-1796 (QSSGQSSSFGGLSPRSDSIGEITSSVTTPPSLSPRSSVSG) is disordered. In terms of domain architecture, Carrier 2 spans 1793–1870 (SVSGSQCKDV…SFKHMFQQGH (78 aa)). Position 1830 is an O-(pantetheine 4'-phosphoryl)serine (Ser1830). Positions 1882–2146 (LKQYRATSTL…ERVAAFIRST (265 aa)) are thioesterase (TE) domain. Catalysis depends on Ser1973, which acts as the For thioesterase activity.

Its function is as follows. Polyketide synthase; part of the Pks1 gene cluster that mediates the biosynthesis of an anthraquinone derivative pigment that contributes to conidial pigmentation that provides protection from UV radiation, heat and cold stress. The polyketide synthase Pks1 produces 1-acetyl-2,4,6,8-tetrahydroxy-9,10-anthraquinone though condensation of acetyl-CoA with malonyl-CoA. The dehydratase EthD and the laccase Mlac1 further convert the anthraquinone derivative into the final conidial pigment. The chain is Polyketide synthase 1 from Metarhizium anisopliae (strain ARSEF 549).